The sequence spans 198 residues: Na(+)-translocating NADH-quinone reductase subunit E (198 aa).

6 helical membrane-spanning segments follow: residues 11 to 31 (AVFIENMALAFFLGMCTFLAV), 35 to 55 (VTTAFGLGIAVTVVLGISVPA), 77 to 97 (FLNFITFIGVIAALVQILEMI), 109 to 129 (LGIFLPLITVNCAIFGGVSFM), 140 to 160 (IVYGFGSGIGWMLAIVLLASI), and 176 to 196 (LGITFVTTGLMALGFMSFSGV).

It belongs to the NqrDE/RnfAE family. In terms of assembly, composed of six subunits; NqrA, NqrB, NqrC, NqrD, NqrE and NqrF.

It is found in the cell inner membrane. The catalysed reaction is a ubiquinone + n Na(+)(in) + NADH + H(+) = a ubiquinol + n Na(+)(out) + NAD(+). In terms of biological role, NQR complex catalyzes the reduction of ubiquinone-1 to ubiquinol by two successive reactions, coupled with the transport of Na(+) ions from the cytoplasm to the periplasm. NqrA to NqrE are probably involved in the second step, the conversion of ubisemiquinone to ubiquinol. The polypeptide is Na(+)-translocating NADH-quinone reductase subunit E (Photorhabdus laumondii subsp. laumondii (strain DSM 15139 / CIP 105565 / TT01) (Photorhabdus luminescens subsp. laumondii)).